The sequence spans 984 residues: MTFSKTRNKIIFLLFLIIINIFNINAYIKDENEDDLSLLISTLDGNIYSFNYESGELNWDLKPNGGDSLYSTSQFDRKQQQSTSTSTEITKSSPSILIPTLDGSGLLFQYSNDRLHQVPFSLQELVNTSPLFLKELEDKSSTSSTSTTSESSKDENKVTMFIGNKKTSITVVDSQTGEIIKSMSKDGLWLTDEDDCPVNIIPDEALMFTRSDYQIIALDPKSGVEKWNLSVGEYIPHSTKSFYNSEISLNFEGLIEVASLSQRMYKIYIKKPEKTVVGISHNYWEHILTSSPVSIYAYSSKKHILKKLDFHRKVSPYSNSLIPVASTDLMIPSNFDRTFMFDDYYGQLFIVSPPSNNNNNNNNNNNNNNNNNNNNNNNNNNNNNNNNNNKNNNNNNKNESDKSNLTPLTPYDPSKPNGANNNNNNNNDLLDSNKLKNYDIYLYSSIVILITSIIVFIRSKKNFNLINVNNNNNQNNNQNSNQNNNINNKKTPKKKKKKQKNKNNKNNNDEDDENEIENYNDNQNDLIDEFISTNSVIQQQQQQQQQLINSSNKINNGSGKIILDNGNVKIGKLEIITNKILGTGSCGTIVYEGKMEGRKVAVKRMLSQFVKFADREVSILIHSDEHTNVVRYYAKEEDDEFIYLAISFCQKSLDMYVQQTLSLQISPTDSPSIQSSNNNGNGNNGNNNNNNQIIIDNKTKQMILELFKGLEHLHSLNIVHRDIKPHNVLIDPNNRVKISDMGLGKLLDNDDQSLTFTSDSHGWQPAEYLNGTNRNTKKVDIFSLGCVVYYLLTGAHPFGHRYNREKNVLKGKFDIDQIKHLPDIHQLVHSMIQFEPEKRPDIGECINHPFFWEVHKKLSFLVAASDYLEFEKPTSPLNLEIDSHVDLVTDGSGDWWLKIDQVLIDNIGRYRKYNGKSIRDLLRVIRNKFNHYRDLSPEEQTCLGILPDGFFNYFDLKFPQLFIVTYLFILKNLKNDQYFVQYYY.

The N-terminal stretch at 1–26 (MTFSKTRNKIIFLLFLIIINIFNINA) is a signal peptide. The Extracellular portion of the chain corresponds to 27 to 436 (YIKDENEDDL…NDLLDSNKLK (410 aa)). Disordered regions lie at residues 70–91 (YSTSQFDRKQQQSTSTSTEITK) and 137–157 (EDKSSTSSTSTTSESSKDENK). Composition is skewed to low complexity over residues 82-91 (STSTSTEITK) and 141-150 (STSSTSTTSE). N-linked (GlcNAc...) asparagine glycosylation is present at Asn228. The disordered stretch occupies residues 352-427 (SPPSNNNNNN…GANNNNNNNN (76 aa)). Positions 356 to 397 (NNNNNNNNNNNNNNNNNNNNNNNNNNNNNNNNNNKNNNNNNK) are enriched in low complexity. Asn398 is a glycosylation site (N-linked (GlcNAc...) asparagine). The helical transmembrane segment at 437-457 (NYDIYLYSSIVILITSIIVFI) threads the bilayer. The Cytoplasmic segment spans residues 458–984 (RSKKNFNLIN…NDQYFVQYYY (527 aa)). The stretch at 467–533 (NVNNNNNQNN…NDLIDEFIST (67 aa)) forms a coiled coil. The span at 472–489 (NNQNNNQNSNQNNNINNK) shows a compositional bias: low complexity. Positions 472–518 (NNQNNNQNSNQNNNINNKKTPKKKKKKQKNKNNKNNNDEDDENEIEN) are disordered. The span at 490–503 (KTPKKKKKKQKNKN) shows a compositional bias: basic residues. The span at 509–518 (DEDDENEIEN) shows a compositional bias: acidic residues. One can recognise a Protein kinase domain in the interval 575–851 (IITNKILGTG…IGECINHPFF (277 aa)). Residues 581–589 (LGTGSCGTI) and Lys603 each bind ATP. The span at 667 to 676 (PTDSPSIQSS) shows a compositional bias: polar residues. The segment at 667 to 692 (PTDSPSIQSSNNNGNGNNGNNNNNNQ) is disordered. Residues 677–691 (NNNGNGNNGNNNNNN) are compositionally biased toward low complexity. Asp722 functions as the Proton acceptor in the catalytic mechanism. Residues 854-984 (VHKKLSFLVA…NDQYFVQYYY (131 aa)) form the KEN domain.

This sequence belongs to the protein kinase superfamily. Ser/Thr protein kinase family.

The protein localises to the membrane. The enzyme catalyses L-seryl-[protein] + ATP = O-phospho-L-seryl-[protein] + ADP + H(+). It catalyses the reaction L-threonyl-[protein] + ATP = O-phospho-L-threonyl-[protein] + ADP + H(+). This chain is Probable serine/threonine-protein kinase ireA (ireA), found in Dictyostelium discoideum (Social amoeba).